Here is a 97-residue protein sequence, read N- to C-terminus: Co-chaperonin GroES (97 aa).

Belongs to the GroES chaperonin family. Heptamer of 7 subunits arranged in a ring. Interacts with the chaperonin GroEL.

Its subcellular location is the cytoplasm. Functionally, together with the chaperonin GroEL, plays an essential role in assisting protein folding. The GroEL-GroES system forms a nano-cage that allows encapsulation of the non-native substrate proteins and provides a physical environment optimized to promote and accelerate protein folding. GroES binds to the apical surface of the GroEL ring, thereby capping the opening of the GroEL channel. This is Co-chaperonin GroES from Enterobacter sp. (strain 638).